The primary structure comprises 123 residues: Ferredoxin-5 (123 aa).

The region spanning 2–119 is the 2Fe-2S ferredoxin-type domain; sequence PNITFTSPIM…DVMVHFTGTP (118 aa). 4 residues coordinate [2Fe-2S] cluster: Cys42, Cys47, Cys50, and Cys102.

This sequence belongs to the 2Fe2S plant-type ferredoxin family. It depends on [2Fe-2S] cluster as a cofactor.

In terms of biological role, ferredoxins are iron-sulfur proteins that transfer electrons in a wide variety of metabolic reactions. This ferredoxin probably participates in nitrogen fixation. This Rhodobacter capsulatus (Rhodopseudomonas capsulata) protein is Ferredoxin-5 (fdxD).